Here is a 246-residue protein sequence, read N- to C-terminus: Chanoclavine-I dehydrogenase easD (246 aa).

The N-terminal stretch at 1–20 (MASVSSKIFAITGGASGIGA) is a signal peptide. NADP(+)-binding residues include Ile18, Asp66, Arg132, Tyr169, and Lys173. Tyr169 serves as the catalytic Proton donor. The active-site Lowers pKa of active site Tyr is Lys173.

The protein belongs to the short-chain dehydrogenases/reductases (SDR) family. In terms of assembly, homotetramer.

It carries out the reaction chanoclavine-I + NAD(+) = chanoclavine-I aldehyde + NADH + H(+). It participates in alkaloid biosynthesis; ergot alkaloid biosynthesis. Its function is as follows. Chanoclavine-I dehydrogenase; part of the gene cluster that mediates the biosynthesis of fungal ergot alkaloid. DmaW catalyzes the first step of ergot alkaloid biosynthesis by condensing dimethylallyl diphosphate (DMAP) and tryptophan to form 4-dimethylallyl-L-tryptophan. The second step is catalyzed by the methyltransferase easF that methylates 4-dimethylallyl-L-tryptophan in the presence of S-adenosyl-L-methionine, resulting in the formation of 4-dimethylallyl-L-abrine. The catalase easC and the FAD-dependent oxidoreductase easE then transform 4-dimethylallyl-L-abrine to chanoclavine-I which is further oxidized by easD in the presence of NAD(+), resulting in the formation of chanoclavine-I aldehyde. Chanoclavine-I aldehyde is the precursor of ergoamides and ergopeptines in Clavicipitaceae, and clavine-type alcaloids such as fumiclavine in Trichocomaceae. However, the metabolites downstream of chanoclavine-I aldehyde in Arthrodermataceae have not been identified yet. This is Chanoclavine-I dehydrogenase easD from Arthroderma benhamiae (strain ATCC MYA-4681 / CBS 112371) (Trichophyton mentagrophytes).